Here is a 454-residue protein sequence, read N- to C-terminus: tRNA(Ile)-lysidine synthase (454 aa).

Residue 31 to 36 (SGGADS) coordinates ATP.

Belongs to the tRNA(Ile)-lysidine synthase family.

The protein localises to the cytoplasm. It catalyses the reaction cytidine(34) in tRNA(Ile2) + L-lysine + ATP = lysidine(34) in tRNA(Ile2) + AMP + diphosphate + H(+). Its function is as follows. Ligates lysine onto the cytidine present at position 34 of the AUA codon-specific tRNA(Ile) that contains the anticodon CAU, in an ATP-dependent manner. Cytidine is converted to lysidine, thus changing the amino acid specificity of the tRNA from methionine to isoleucine. In Porphyromonas gingivalis (strain ATCC 33277 / DSM 20709 / CIP 103683 / JCM 12257 / NCTC 11834 / 2561), this protein is tRNA(Ile)-lysidine synthase.